Consider the following 196-residue polypeptide: dTTP/UTP pyrophosphatase (196 aa).

The active-site Proton acceptor is aspartate 77.

This sequence belongs to the Maf family. YhdE subfamily. The cofactor is a divalent metal cation.

It localises to the cytoplasm. The enzyme catalyses dTTP + H2O = dTMP + diphosphate + H(+). It catalyses the reaction UTP + H2O = UMP + diphosphate + H(+). Its function is as follows. Nucleoside triphosphate pyrophosphatase that hydrolyzes dTTP and UTP. May have a dual role in cell division arrest and in preventing the incorporation of modified nucleotides into cellular nucleic acids. This Christiangramia forsetii (strain DSM 17595 / CGMCC 1.15422 / KT0803) (Gramella forsetii) protein is dTTP/UTP pyrophosphatase.